A 313-amino-acid polypeptide reads, in one-letter code: Protein TIFY 4A (313 aa).

A disordered region spans residues 118–149; the sequence is SPRSAEFSGGSGHFVSEKDGHKTTISPRSPAE. Residues 150-185 enclose the Tify domain; the sequence is TSELVGQMTIFYSGKVNVYDGIPPEKARSIMHFAAN. Disordered regions lie at residues 220–256 and 281–313; these read KANS…KAKK and QNLG…SEGI. A Jas motif is present at residues 232–254; it reads QANRKVSLQRYREKRKDRKFSKA. Residues 234-241 carry the Nuclear localization signal motif; the sequence is NRKVSLQR. A compositionally biased stretch (basic residues) spans 243 to 256; it reads REKRKDRKFSKAKK.

The protein belongs to the TIFY/JAZ family. Interacts with AFPH2/NINJA.

It is found in the nucleus. Functionally, regulates the arrest of dispersed meristematic cells during lamina development. The sequence is that of Protein TIFY 4A (TIFY4A) from Arabidopsis thaliana (Mouse-ear cress).